A 130-amino-acid chain; its full sequence is Large ribosomal subunit protein bL12c (130 aa).

Belongs to the bacterial ribosomal protein bL12 family. As to quaternary structure, homodimer. Part of the ribosomal stalk of the 50S ribosomal subunit. Forms a multimeric L10(L12)X complex, where L10 forms an elongated spine to which 2 to 4 L12 dimers bind in a sequential fashion. Binds GTP-bound translation factors.

It localises to the plastid. The protein resides in the chloroplast. Its function is as follows. Forms part of the ribosomal stalk which helps the ribosome interact with GTP-bound translation factors. Is thus essential for accurate translation. The protein is Large ribosomal subunit protein bL12c of Cyanidium caldarium (Red alga).